A 363-amino-acid polypeptide reads, in one-letter code: 3-isopropylmalate dehydrogenase (363 aa).

79–92 is a binding site for NAD(+); the sequence is GPKWEHLPPNEQPE. R100, R110, R139, and D228 together coordinate substrate. Residues D228, D252, and D256 each contribute to the Mg(2+) site. 286 to 298 lines the NAD(+) pocket; sequence GSAPDIAGKNIAN.

The protein belongs to the isocitrate and isopropylmalate dehydrogenases family. LeuB type 1 subfamily. As to quaternary structure, homodimer. Mg(2+) serves as cofactor. Requires Mn(2+) as cofactor.

The protein resides in the cytoplasm. The catalysed reaction is (2R,3S)-3-isopropylmalate + NAD(+) = 4-methyl-2-oxopentanoate + CO2 + NADH. Its pathway is amino-acid biosynthesis; L-leucine biosynthesis; L-leucine from 3-methyl-2-oxobutanoate: step 3/4. Catalyzes the oxidation of 3-carboxy-2-hydroxy-4-methylpentanoate (3-isopropylmalate) to 3-carboxy-4-methyl-2-oxopentanoate. The product decarboxylates to 4-methyl-2 oxopentanoate. The sequence is that of 3-isopropylmalate dehydrogenase from Vibrio cholerae serotype O1 (strain ATCC 39315 / El Tor Inaba N16961).